The following is a 1323-amino-acid chain: Sister chromatid cohesion protein PDS5 homolog A-B (1323 aa).

An HEAT repeat occupies 385–421 (FLVNDQLLGFVRERTLDKRWRVRKEAMMGLAQLYKKY). The tract at residues 1138 to 1323 (PLNATGRRPY…TAQRQIDLHR (186 aa)) is disordered. Residues 1153-1165 (SEISNNVSINSES) are compositionally biased toward low complexity. 2 stretches are compositionally biased toward polar residues: residues 1166–1176 (DASVANRQSSE) and 1210–1220 (LDQTAPSNTGT). Residues 1235 to 1246 (NIRKESEEKKVD) are compositionally biased toward basic and acidic residues.

Interacts with the cohesin complex. Binds chromatin in a cohesin-dependent manner.

The protein resides in the nucleus. In terms of biological role, may regulate sister chromatid cohesion during mitosis and couple it to DNA replication. This chain is Sister chromatid cohesion protein PDS5 homolog A-B (pds5a-b), found in Xenopus laevis (African clawed frog).